The chain runs to 453 residues: Carbamoyl phosphate synthase arginine-specific small chain (453 aa).

Residues 1–28 (MFARVFKAMPARAPAFTSVNASIQSRFM) constitute a mitochondrion transit peptide. In terms of domain architecture, Glutamine amidotransferase type-1 spans 219–406 (HVAVIDCGVK…LDSVVKYKNH (188 aa)). Cys295 functions as the Nucleophile in the catalytic mechanism. Active-site residues include His379 and Glu381.

Belongs to the CarA family. In terms of assembly, heterodimer composed of 2 chains; the small (or glutamine) chain promotes the hydrolysis of glutamine to ammonia, which is used by the large (or ammonia) chain to synthesize carbamoyl phosphate.

It is found in the mitochondrion matrix. The enzyme catalyses hydrogencarbonate + L-glutamine + 2 ATP + H2O = carbamoyl phosphate + L-glutamate + 2 ADP + phosphate + 2 H(+). The catalysed reaction is L-glutamine + H2O = L-glutamate + NH4(+). It functions in the pathway amino-acid biosynthesis; L-arginine biosynthesis; carbamoyl phosphate from bicarbonate: step 1/1. Its function is as follows. Small subunit of the arginine-specific carbamoyl phosphate synthase (CPSase). CPSase catalyzes the formation of carbamoyl phosphate from the ammonia moiety of glutamine, carbonate, and phosphate donated by ATP, the first step of the arginine biosynthetic pathway. The small subunit (glutamine amidotransferase) binds and cleaves glutamine to supply the large subunit with the substrate ammonia. This Aspergillus niger (strain ATCC MYA-4892 / CBS 513.88 / FGSC A1513) protein is Carbamoyl phosphate synthase arginine-specific small chain (cpa1).